The following is a 429-amino-acid chain: Adenylosuccinate synthetase (429 aa).

GTP-binding positions include 12 to 18 (GDEGKGK) and 40 to 42 (GHT). The active-site Proton acceptor is Asp-13. Residues Asp-13 and Gly-40 each coordinate Mg(2+). IMP is bound by residues 13–16 (DEGK), 38–41 (NAGH), Thr-128, Arg-142, Gln-223, Thr-238, and Arg-302. His-41 functions as the Proton donor in the catalytic mechanism. 298–304 (TTTGRPR) lines the substrate pocket. Residues Arg-304, 330-332 (SID), and 412-414 (SVG) contribute to the GTP site.

It belongs to the adenylosuccinate synthetase family. Homodimer. Mg(2+) serves as cofactor.

It is found in the cytoplasm. The catalysed reaction is IMP + L-aspartate + GTP = N(6)-(1,2-dicarboxyethyl)-AMP + GDP + phosphate + 2 H(+). It participates in purine metabolism; AMP biosynthesis via de novo pathway; AMP from IMP: step 1/2. Its function is as follows. Plays an important role in the de novo pathway of purine nucleotide biosynthesis. Catalyzes the first committed step in the biosynthesis of AMP from IMP. This Exiguobacterium sp. (strain ATCC BAA-1283 / AT1b) protein is Adenylosuccinate synthetase.